Here is a 273-residue protein sequence, read N- to C-terminus: Dermonecrotic toxin LapSicTox-alphaIB1c (273 aa).

Histidine 5 is an active-site residue. Residues glutamate 25 and aspartate 27 each coordinate Mg(2+). Histidine 41 acts as the Nucleophile in catalysis. 2 disulfide bridges follow: cysteine 45–cysteine 51 and cysteine 47–cysteine 190. A Mg(2+)-binding site is contributed by aspartate 85. Residue asparagine 250 is glycosylated (N-linked (GlcNAc...) asparagine).

It belongs to the arthropod phospholipase D family. Class II subfamily. The cofactor is Mg(2+). As to expression, expressed by the venom gland.

The protein localises to the secreted. It catalyses the reaction an N-(acyl)-sphingosylphosphocholine = an N-(acyl)-sphingosyl-1,3-cyclic phosphate + choline. It carries out the reaction an N-(acyl)-sphingosylphosphoethanolamine = an N-(acyl)-sphingosyl-1,3-cyclic phosphate + ethanolamine. The enzyme catalyses a 1-acyl-sn-glycero-3-phosphocholine = a 1-acyl-sn-glycero-2,3-cyclic phosphate + choline. The catalysed reaction is a 1-acyl-sn-glycero-3-phosphoethanolamine = a 1-acyl-sn-glycero-2,3-cyclic phosphate + ethanolamine. Dermonecrotic toxins cleave the phosphodiester linkage between the phosphate and headgroup of certain phospholipids (sphingolipid and lysolipid substrates), forming an alcohol (often choline) and a cyclic phosphate. This toxin acts on sphingomyelin (SM). It may also act on ceramide phosphoethanolamine (CPE), lysophosphatidylcholine (LPC) and lysophosphatidylethanolamine (LPE), but not on lysophosphatidylserine (LPS), and lysophosphatidylglycerol (LPG). It acts by transphosphatidylation, releasing exclusively cyclic phosphate products as second products. Induces dermonecrosis, hemolysis, increased vascular permeability, edema, inflammatory response, and platelet aggregation. The sequence is that of Dermonecrotic toxin LapSicTox-alphaIB1c from Loxosceles apachea (Apache recluse spider).